The sequence spans 492 residues: Solute carrier family 2, facilitated glucose transporter member 1 (492 aa).

The residue at position 1 (M1) is an N-acetylmethionine. At 1-11 (MEPSSKKVTGR) the chain is on the cytoplasmic side. A helical membrane pass occupies residues 12-33 (LMLAVGGAVLGSLQFGYNTGVI). The Extracellular segment spans residues 34-66 (NAPQKVIEEFYNQTWNHRYGESIPSTTLTTLWS). N45 carries N-linked (GlcNAc...) asparagine glycosylation. Residues 67–87 (LSVAIFSVGGMIGSFSVGLFV) form a helical membrane-spanning segment. Residues 88–90 (NRF) are Cytoplasmic-facing. Residues 91-112 (GRRNSMLMMNLLAFVSAVLMGF) traverse the membrane as a helical segment. At 113 to 120 (SKLGKSFE) the chain is on the extracellular side. A helical membrane pass occupies residues 121–144 (MLILGRFIIGVYCGLTTGFVPMYV). Residues 145–155 (GEVSPTALRGA) are Cytoplasmic-facing. Residues 156-176 (LGTLHQLGIVVGILIAQVFGL) traverse the membrane as a helical segment. Q161 is a binding site for D-glucose. At 177-185 (DSIMGNADL) the chain is on the extracellular side. A helical transmembrane segment spans residues 186-206 (WPLLLSVIFIPALLQCILLPF). The Cytoplasmic segment spans residues 207-271 (CPESPRFLLI…LFRSPAYRQP (65 aa)). Residue S226 is modified to Phosphoserine. A helical membrane pass occupies residues 272–293 (ILIAVVLQLSQQLSGINAVFYY). D-glucose is bound by residues 282–283 (QQ) and N288. The Extracellular segment spans residues 294 to 306 (STSIFEKAGVQQP). Residues 307 to 328 (VYATIGSGIVNTAFTVVSLFVV) traverse the membrane as a helical segment. A D-glucose-binding site is contributed by N317. Residues 329–334 (ERAGRR) are Cytoplasmic-facing. Residues 335 to 355 (TLHLIGLAGMAGCAVLMTIAL) traverse the membrane as a helical segment. At 356–365 (ALLEQLPWMS) the chain is on the extracellular side. A helical transmembrane segment spans residues 366-388 (YLSIVAIFGFVAFFEVGPGPIPW). D-glucose is bound by residues E380 and W388. Residues 389 to 401 (FIVAELFSQGPRP) lie on the Cytoplasmic side of the membrane. The chain crosses the membrane as a helical span at residues 402–422 (AAVAVAGFSNWTSNFIVGMCF). The Extracellular portion of the chain corresponds to 423–429 (QYVEQLC). The helical transmembrane segment at 430–450 (GPYVFIIFTVLLVLFFIFTYF) threads the bilayer. Residues 451 to 492 (KVPETKGRTFDEIASGFRQGGASQSDKTPEELFHPLGADSQV) are Cytoplasmic-facing. Residue S465 is modified to Phosphoserine. Residues 468–492 (RQGGASQSDKTPEELFHPLGADSQV) are disordered. Phosphothreonine is present on T478. S490 is subject to Phosphoserine.

The protein belongs to the major facilitator superfamily. Sugar transporter (TC 2.A.1.1) family. Glucose transporter subfamily. In terms of assembly, found in a complex with ADD2, DMTN and SLC2A1. Interacts (via C-terminus cytoplasmic region) with DMTN. Interacts with SNX27; the interaction is required when endocytosed to prevent degradation in lysosomes and promote recycling to the plasma membrane. Interacts with STOM. Interacts with GIPC (via PDZ domain). Interacts with SGTA (via Gln-rich region). Interacts with isoform 1 of BSG. Interacts with SMIM43; the interaction may promote SLC2A1-mediated glucose transport to meet the energy needs of mesendoderm differentiation. Post-translationally, phosphorylation at Ser-226 by PKC promotes glucose uptake by increasing cell membrane localization. As to expression, detected in osteoblastic cells (at protein level). Detected in brain, and at lower levels in kidney, heart and lung.

It localises to the cell membrane. Its subcellular location is the photoreceptor inner segment. The enzyme catalyses D-glucose(out) = D-glucose(in). Its activity is regulated as follows. The uptake of glucose is inhibited by cytochalasin B. Glucose uptake is increased in response to phorbol ester 12-O-tetradecanoylphorbol-13-acetate (TPA) treatment: TPA-induced glucose uptake requires phosphorylation at Ser-226. In terms of biological role, facilitative glucose transporter, which is responsible for constitutive or basal glucose uptake. Has a very broad substrate specificity; can transport a wide range of aldoses including both pentoses and hexoses. Most important energy carrier of the brain: present at the blood-brain barrier and assures the energy-independent, facilitative transport of glucose into the brain. In association with BSG and NXNL1, promotes retinal cone survival by increasing glucose uptake into photoreceptors. Required for mesendoderm differentiation. This is Solute carrier family 2, facilitated glucose transporter member 1 from Rattus norvegicus (Rat).